The following is a 356-amino-acid chain: Dihydroorotate dehydrogenase (quinone) (356 aa).

FMN-binding positions include Ala-68 to Lys-72 and Thr-92. Lys-72 lines the substrate pocket. Asn-117–Phe-121 is a substrate binding site. Positions 145 and 178 each coordinate FMN. Residue Asn-178 participates in substrate binding. Ser-181 (nucleophile) is an active-site residue. Position 183 (Asn-183) interacts with substrate. FMN is bound by residues Lys-214 and Thr-242. Residue Asn-243–Thr-244 participates in substrate binding. FMN is bound by residues Gly-266, Gly-295, and Tyr-316–Thr-317.

Belongs to the dihydroorotate dehydrogenase family. Type 2 subfamily. Monomer. FMN serves as cofactor.

The protein localises to the cell membrane. It carries out the reaction (S)-dihydroorotate + a quinone = orotate + a quinol. Its pathway is pyrimidine metabolism; UMP biosynthesis via de novo pathway; orotate from (S)-dihydroorotate (quinone route): step 1/1. Catalyzes the conversion of dihydroorotate to orotate with quinone as electron acceptor. The protein is Dihydroorotate dehydrogenase (quinone) of Mycobacterium sp. (strain KMS).